The sequence spans 39 residues: Protein disulfide-isomerase A3 (39 aa).

This sequence belongs to the protein disulfide isomerase family. Part of the major histocompatibility complex class I (MHC I) peptide loading complex composed of TAP1, TAP2, B2M, MHC heavy chain, TAPBP, PDIA3, and CALR. Interacts with ERP27 and CANX. Interacts with SERPINA2 and with SERPINA1. Interacts with ATP2A2. Post-translationally, within the major histocompatibility complex class I (MHC I) peptide loading complex forms reversible disulfide-linked heterodimers with TAPBP as part of its protein folding chaperone activity. This is essential to assist the dynamic assembly of the MHC I complex with high affinity antigens in the endoplasmic reticulum. In terms of processing, phosphorylated. Predominantly expressed in liver. Low in brain, testis and colon. Not detectable in pancreas and skeletal muscle.

Its subcellular location is the endoplasmic reticulum. The protein resides in the endoplasmic reticulum lumen. It is found in the melanosome. The catalysed reaction is Catalyzes the rearrangement of -S-S- bonds in proteins.. Protein disulfide isomerase that catalyzes the formation, isomerization, and reduction or oxidation of disulfide bonds in client proteins and functions as a protein folding chaperone. Core component of the major histocompatibility complex class I (MHC I) peptide loading complex where it functions as an essential folding chaperone for TAPBP. Through TAPBP, assists the dynamic assembly of the MHC I complex with high affinity antigens in the endoplasmic reticulum. Therefore, plays a crucial role in the presentation of antigens to cytotoxic T cells in adaptive immunity. The sequence is that of Protein disulfide-isomerase A3 (PDIA3) from Papio hamadryas (Hamadryas baboon).